The following is a 370-amino-acid chain: Cytochrome b (370 aa).

Transmembrane regions (helical) follow at residues 25–45 (FGSM…FLAI), 69–90 (WIMQ…YIHI), 105–125 (WLSG…GYVL), and 170–190 (FFAL…IHII). Histidine 75 and histidine 89 together coordinate heme b. Heme b is bound by residues histidine 174 and histidine 188. Residue histidine 193 coordinates a ubiquinone. Transmembrane regions (helical) follow at residues 218 to 238 (YKDM…MSFT), 280 to 300 (LGGT…PFTH), 312 to 332 (LTQI…WTAT), and 339 to 358 (FISI…IINP).

It belongs to the cytochrome b family. As to quaternary structure, the cytochrome bc1 complex contains 3 respiratory subunits (MT-CYB, CYC1 and UQCRFS1), 2 core proteins (UQCRC1 and UQCRC2) and probably 6 low-molecular weight proteins. Heme b is required as a cofactor.

It is found in the mitochondrion inner membrane. Functionally, component of the ubiquinol-cytochrome c reductase complex (complex III or cytochrome b-c1 complex) that is part of the mitochondrial respiratory chain. The b-c1 complex mediates electron transfer from ubiquinol to cytochrome c. Contributes to the generation of a proton gradient across the mitochondrial membrane that is then used for ATP synthesis. This is Cytochrome b (MT-CYB) from Bungarus fasciatus (Banded krait).